Reading from the N-terminus, the 433-residue chain is E3 ubiquitin-protein ligase RNF26 (433 aa).

The next 5 helical transmembrane spans lie at 24–44 (LNFL…AFVY), 60–80 (GVLL…CGGL), 147–169 (VINS…VLAL), 183–203 (VVAA…ILLW), and 220–240 (LASF…VLAV). An RING-type zinc finger spans residues 380–422 (CVICQDQSKTVLLLPCRHLCLCQACTEILMRHPVYHRNCPLCR).

In terms of assembly, interacts with INCA1. Interacts with TMEM43, ENDOD1, TMEM33 and TMED1 to form a complex capable of modulating innate immune signaling through the cGAS-STING pathway. Interacts with UBE2J1; this interaction is important for SQSTM1 ubiquitination. Ubiquitous. Up-regulated in several cancer cell lines.

It is found in the endoplasmic reticulum membrane. The catalysed reaction is S-ubiquitinyl-[E2 ubiquitin-conjugating enzyme]-L-cysteine + [acceptor protein]-L-lysine = [E2 ubiquitin-conjugating enzyme]-L-cysteine + N(6)-ubiquitinyl-[acceptor protein]-L-lysine.. The protein operates within protein modification; protein ubiquitination. Its function is as follows. E3 ubiquitin-protein ligase that plays a key role in endosome organization by retaining vesicles in the perinuclear cloud. Acts as a platform for perinuclear positioning of the endosomal system by mediating ubiquitination of SQSTM1 through interaction with the ubiquitin conjugating enzyme UBE2J1. Ubiquitinated SQSTM1 attracts specific vesicle-associated adapters, forming a molecular bridge that restrains cognate vesicles in the perinuclear region and organizes the endosomal pathway for efficient cargo transport. Also acts as a regulator of type I interferon production in response to viral infection by mediating the formation of 'Lys-11'-linked polyubiquitin chains on TMEM173/STING, leading to stabilize TMEM173/STING. Also required to limit type I interferon response by promoting autophagic degradation of IRF3. The protein is E3 ubiquitin-protein ligase RNF26 of Homo sapiens (Human).